We begin with the raw amino-acid sequence, 236 residues long: Bacterial rhodopsin CSR3 (236 aa).

The Extracellular segment spans residues 1–3 (MDA). A helical membrane pass occupies residues 4-25 (VAVVYGITAAGFAVGVAIVGYL). At 26–34 (YASLEGSEE) the chain is on the cytoplasmic side. Residues 35–56 (RSILAALALIPGFAGISYVAMA) traverse the membrane as a helical segment. At 57–70 (FGIGTVTIGETTLV) the chain is on the extracellular side. The chain crosses the membrane as a helical span at residues 71-92 (GFRYLDWVVTTPLLVGFVGYAA). Over 93 to 95 (GAS) the chain is Cytoplasmic. Residues 96–118 (RRAIFGVMVADALMILTGVGAVV) traverse the membrane as a helical segment. Topologically, residues 119 to 122 (ADGT) are extracellular. The chain crosses the membrane as a helical span at residues 123–150 (LKWVLFGVSTVFHVSLFAYLYLVFPRSV). Residues 151-153 (PDD) are Cytoplasmic-facing. The chain crosses the membrane as a helical span at residues 154 to 181 (PQRIGLFSLLKNHIGLLWIAYPLVWLAG). The Extracellular segment spans residues 182-189 (PEGLGLAT). A helical transmembrane segment spans residues 190 to 222 (YVGVSITYAFLDLLAKVPYVYFFYARRQVFATK). The residue at position 205 (Lys205) is an N6-(retinylidene)lysine. Topologically, residues 223–236 (LLRDSGEVTATPAD) are cytoplasmic.

Belongs to the archaeal/bacterial/fungal opsin family.

The protein resides in the cell membrane. The chain is Bacterial rhodopsin CSR3 from Haloarcula vallismortis (Halobacterium vallismortis).